A 285-amino-acid chain; its full sequence is VQ motif-containing protein 20 (285 aa).

Residues 1–10 are compositionally biased toward basic and acidic residues; sequence MSSTYKDNHP. Residues 1–68 form a disordered region; the sequence is MSSTYKDNHP…PSPSSFSSAA (68 aa). Residues 11–23 show a composition bias toward basic residues; sequence YHHHPHHHHHHPK. The short motif at 91–100 is the VQ element; sequence FMALVQKLTG. Positions 195-218 are disordered; it reads YSAVAIPPQPPPHPPPPPPPPSMY. The span at 201–216 shows a compositional bias: pro residues; the sequence is PPQPPPHPPPPPPPPS.

It localises to the nucleus. In terms of biological role, may function as negative regulator of plant defense. In Arabidopsis thaliana (Mouse-ear cress), this protein is VQ motif-containing protein 20.